A 197-amino-acid polypeptide reads, in one-letter code: uncharacterized protein (197 aa).

The signal sequence occupies residues 1 to 23; the sequence is MSARAPKELRLALPPCLLNRTFA. N-linked (GlcNAc...) asparagine glycans are attached at residues Asn-19 and Asn-26. Over 24–61 the chain is Extracellular; it reads SPNASGSGNTGARGPGAGGSGTCITQVGQQLFQSFSST. Residues 62 to 82 form a helical membrane-spanning segment; sequence LVLIVLVTLIFCLIVLSLSTF. At 83–197 the chain is on the cytoplasmic side; the sequence is HIHKRRMKKR…EGLLQTVVLS (115 aa). The tract at residues 94-179 is disordered; it reads MQRAQEEYER…ASSPQGAHAV (86 aa). 2 stretches are compositionally biased toward basic and acidic residues: residues 96 to 107 and 125 to 136; these read RAQEEYERDHCS and HAKETRLERQPR. The segment covering 147 to 161 has biased composition (low complexity); sequence SSSSSSSPGLPCQGP. The span at 162 to 171 shows a compositional bias: pro residues; it reads CAPPPPPPAS.

Its subcellular location is the membrane. This is an uncharacterized protein from Pongo abelii (Sumatran orangutan).